A 676-amino-acid polypeptide reads, in one-letter code: DNA ligase (676 aa).

NAD(+) contacts are provided by residues 39-43 (DYVYD), 88-91 (SLND), and Glu-118. Catalysis depends on Lys-120, which acts as the N6-AMP-lysine intermediate. Positions 141, 175, 291, and 315 each coordinate NAD(+). Residues Cys-409, Cys-412, Cys-427, and Cys-432 each contribute to the Zn(2+) site. Residues 595-676 (EVESPFKDKT…MVDALDASHF (82 aa)) form the BRCT domain.

The protein belongs to the NAD-dependent DNA ligase family. LigA subfamily. Requires Mg(2+) as cofactor. It depends on Mn(2+) as a cofactor.

It catalyses the reaction NAD(+) + (deoxyribonucleotide)n-3'-hydroxyl + 5'-phospho-(deoxyribonucleotide)m = (deoxyribonucleotide)n+m + AMP + beta-nicotinamide D-nucleotide.. DNA ligase that catalyzes the formation of phosphodiester linkages between 5'-phosphoryl and 3'-hydroxyl groups in double-stranded DNA using NAD as a coenzyme and as the energy source for the reaction. It is essential for DNA replication and repair of damaged DNA. The polypeptide is DNA ligase (Enterococcus faecalis (strain ATCC 700802 / V583)).